Consider the following 734-residue polypeptide: Photosystem I P700 chlorophyll a apoprotein A2 (734 aa).

A run of 8 helical transmembrane segments spans residues 46 to 69, 135 to 158, 175 to 199, 273 to 291, 330 to 353, 369 to 395, 417 to 439, and 517 to 535; these read IFASHFGQLAIIFLWTSGNLFHVA, LYTGALFLLFLSAISLIAGWLHLQ, LNHHLSGLFGVSSLAWTGHLVHVAI, IAHHHLAIAFVFLVAGHMY, IHFQLGLALASLGVITSLVAQHMY, AALYTHHQYIAGFIMTGAFAHGAIFFI, AIKSHLSWASLFLGFHTLGLYVH, and FLVHHAIALGLHTTTLILV. Residues Cys-559 and Cys-568 each contribute to the [4Fe-4S] cluster site. The next 2 membrane-spanning stretches (helical) occupy residues 575-596 and 643-665; these read AFYLAVFWMLNTIGWVTFYWHW and LSVWAWMFLFGHLVWATGFMFLI. Chlorophyll a contacts are provided by His-654, Met-662, and Tyr-670. Trp-671 contributes to the phylloquinone binding site. The chain crosses the membrane as a helical span at residues 707–727; sequence LVGLAHFSVGYIFTYAAFLIA.

The protein belongs to the PsaA/PsaB family. The PsaA/B heterodimer binds the P700 chlorophyll special pair and subsequent electron acceptors. PSI consists of a core antenna complex that captures photons, and an electron transfer chain that converts photonic excitation into a charge separation. The eukaryotic PSI reaction center is composed of at least 11 subunits. P700 is a chlorophyll a/chlorophyll a' dimer, A0 is one or more chlorophyll a, A1 is one or both phylloquinones and FX is a shared 4Fe-4S iron-sulfur center. serves as cofactor.

It localises to the plastid. The protein localises to the chloroplast thylakoid membrane. It carries out the reaction reduced [plastocyanin] + hnu + oxidized [2Fe-2S]-[ferredoxin] = oxidized [plastocyanin] + reduced [2Fe-2S]-[ferredoxin]. Its function is as follows. PsaA and PsaB bind P700, the primary electron donor of photosystem I (PSI), as well as the electron acceptors A0, A1 and FX. PSI is a plastocyanin-ferredoxin oxidoreductase, converting photonic excitation into a charge separation, which transfers an electron from the donor P700 chlorophyll pair to the spectroscopically characterized acceptors A0, A1, FX, FA and FB in turn. Oxidized P700 is reduced on the lumenal side of the thylakoid membrane by plastocyanin. The chain is Photosystem I P700 chlorophyll a apoprotein A2 from Illicium oligandrum (Star anise).